Consider the following 843-residue polypeptide: Transmembrane protease serine 7 (843 aa).

Residues 1-76 (MDKENSDVSA…KVPFWNVQNK (76 aa)) are Cytoplasmic-facing. Residues 27–67 (AQKKLPVRRPPLPGRRLPLPGRRPPQRPIGKAKPKKQSKKK) are disordered. The segment covering 56–67 (GKAKPKKQSKKK) has biased composition (basic residues). Residues 77 to 97 (IILFTVFLFILAVIAWTLLWL) form a helical; Signal-anchor for type II membrane protein membrane-spanning segment. Topologically, residues 98-843 (YISKTESKDA…WIHKYVPSLL (746 aa)) are extracellular. Residues 106-234 (DAFYFAGMFR…DSVVLNAGLR (129 aa)) form the SEA domain. 12 cysteine pairs are disulfide-bonded: C247–C273, C299–C322, C365–C396, C484–C496, C491–C509, C503–C518, C525–C544, C538–C553, C559–C571, C566–C585, C579–C594, and C631–C647. 2 CUB domains span residues 247 to 360 (CSQY…FEVI) and 365 to 481 (CENT…YNIS). LDL-receptor class A domains are found at residues 483–519 (PCPVGSFRCSSGLCVPQAQRCDGVNDCFDESDELFCV), 517–554 (FCVSPQPACNTSSFRQHGPLICDGFRDCENGRDEQNCT), and 558–595 (PCNNRTFKCGNDICFRKQNAKCDGTVDCPDGSDEEGCT). One can recognise a Peptidase S1 domain in the interval 606–840 (IIGGTDTLEG…FVPWIHKYVP (235 aa)). Catalysis depends on charge relay system residues H646 and D694. 2 disulfide bridges follow: C730/C796 and C762/C775. The active-site Charge relay system is S790.

It belongs to the peptidase S1 family. In terms of assembly, forms a heterodimer with SERPINA5. In terms of processing, N-glycosylated. In terms of tissue distribution, expressed in brain, ovary, testis, salivary gland, trachea and lung.

Its subcellular location is the cell membrane. Functionally, serine protease which preferentially hydrolyzes peptides with Arg at the P1 position. The polypeptide is Transmembrane protease serine 7 (TMPRSS7) (Homo sapiens (Human)).